A 67-amino-acid polypeptide reads, in one-letter code: Large ribosomal subunit protein uL30 (67 aa).

Belongs to the universal ribosomal protein uL30 family. Part of the 50S ribosomal subunit.

The polypeptide is Large ribosomal subunit protein uL30 (Thermotoga neapolitana (strain ATCC 49049 / DSM 4359 / NBRC 107923 / NS-E)).